The sequence spans 72 residues: Translation initiation factor IF-1 (72 aa).

Residues 1-72 (MAKEDVIEFS…TKGRITFRYK (72 aa)) enclose the S1-like domain.

This sequence belongs to the IF-1 family. In terms of assembly, component of the 30S ribosomal translation pre-initiation complex which assembles on the 30S ribosome in the order IF-2 and IF-3, IF-1 and N-formylmethionyl-tRNA(fMet); mRNA recruitment can occur at any time during PIC assembly.

The protein localises to the cytoplasm. In terms of biological role, one of the essential components for the initiation of protein synthesis. Stabilizes the binding of IF-2 and IF-3 on the 30S subunit to which N-formylmethionyl-tRNA(fMet) subsequently binds. Helps modulate mRNA selection, yielding the 30S pre-initiation complex (PIC). Upon addition of the 50S ribosomal subunit IF-1, IF-2 and IF-3 are released leaving the mature 70S translation initiation complex. The polypeptide is Translation initiation factor IF-1 (Paramagnetospirillum magneticum (strain ATCC 700264 / AMB-1) (Magnetospirillum magneticum)).